The primary structure comprises 246 residues: tRNA pseudouridine synthase A (246 aa).

The active-site Nucleophile is the Asp-52. Tyr-111 lines the substrate pocket.

Belongs to the tRNA pseudouridine synthase TruA family. In terms of assembly, homodimer.

The catalysed reaction is uridine(38/39/40) in tRNA = pseudouridine(38/39/40) in tRNA. In terms of biological role, formation of pseudouridine at positions 38, 39 and 40 in the anticodon stem and loop of transfer RNAs. In Parvibaculum lavamentivorans (strain DS-1 / DSM 13023 / NCIMB 13966), this protein is tRNA pseudouridine synthase A.